A 917-amino-acid chain; its full sequence is Dolichyl-phosphooligosaccharide-protein glycotransferase (917 aa).

A compositionally biased stretch (basic and acidic residues) spans 1 to 10 (MTENNEKVKN). Residues 1–20 (MTENNEKVKNSDSANNQSSK) form a disordered region. Over 1-38 (MTENNEKVKNSDSANNQSSKNSKFNFNFEDKKVKCAKT) the chain is Cytoplasmic. Over residues 11 to 20 (SDSANNQSSK) the composition is skewed to low complexity. Residues 39-59 (ILIIIFLAFLSFQMRAQTADM) traverse the membrane as a helical segment. Residues 60–154 (GFTTNEQYLD…AMDSTVTLMN (95 aa)) lie on the Extracellular side of the membrane. The DXD motif 1 signature appears at 82-84 (ALD). Asp-84 serves as a coordination point for Mn(2+). Residues 155–175 (AAFWVPAILSMFLITPIFFTV) traverse the membrane as a helical segment. Residues 176–182 (RRITSSD) are Cytoplasmic-facing. A helical membrane pass occupies residues 183–203 (IGGAVAAILASLSPSIFVKTV). Over 204 to 209 (AGFSDT) the chain is Extracellular. Mn(2+) is bound at residue Asp-208. The DXD motif 2 motif lies at 208–210 (DTP). The chain crosses the membrane as a helical span at residues 210 to 230 (PILEILPLLFIVWFIIEAIHY). Residues 231–237 (SKEKNYK) lie on the Cytoplasmic side of the membrane. A helical transmembrane segment spans residues 238–260 (SLIYGLLATLMLALYPFMWSAWW). The Extracellular portion of the chain corresponds to 261–263 (YGY). Residues 264 to 286 (YIVIAFLVIYAIYKGISYNSIAK) traverse the membrane as a helical segment. Over 287–308 (YTKSKNNNHKDKIESEKLEMLN) the chain is Cytoplasmic. A helical transmembrane segment spans residues 309 to 329 (ILKISGLFIIGGAVLITALYG). The Extracellular portion of the chain corresponds to 330–372 (VSTTMNALQAPLNYLGLDEVSSQTGWPNVLTTVSELDTASLDE). The TIXE motif signature appears at 361–364 (TVSE). Glu-364 serves as a coordination point for Mn(2+). Residues 373 to 393 (IISSSLGSIHLFAIGLIGIFL) form a helical membrane-spanning segment. Over 394–413 (SLFRKVLTPVKQISNGLAEK) the chain is Cytoplasmic. A helical transmembrane segment spans residues 414-434 (LDIKYALLLIIWFAVTFLAAS). Residues 435–438 (KGVR) are Extracellular-facing. Residue Arg-438 coordinates a glycophospholipid. Residues 439-459 (FVALMVPPLSIGVGIFVGFIE) traverse the membrane as a helical segment. At 460-469 (QFIKNNLDKK) the chain is on the cytoplasmic side. A helical membrane pass occupies residues 470–490 (YEYVAYPTIAIIVLYALFTIY). The Extracellular portion of the chain corresponds to 491–506 (RADSADLVRMLLPSNY). Residues 507–527 (VPIAEGIMLASLAVLIIYKVA) form a helical membrane-spanning segment. The Cytoplasmic segment spans residues 528 to 541 (ELIAESNKKLVMNK). The chain crosses the membrane as a helical span at residues 542-562 (IFMILLAIGLITPTIATIVPF). Topologically, residues 563–917 (YSVPTYNDGW…FSVDYGNYSK (355 aa)) are extracellular. Positions 592-594 (WWD) are interacts with target acceptor peptide in protein substrate. Residues 592-596 (WWDNG) carry the WWDYG motif motif. An MI motif motif is present at residues 719-726 (MTSIASVW).

The protein belongs to the STT3 family. Requires Mn(2+) as cofactor. Mg(2+) is required as a cofactor.

Its subcellular location is the cell membrane. It catalyses the reaction an archaeal dolichyl phosphooligosaccharide + [protein]-L-asparagine = an archaeal dolichyl phosphate + a glycoprotein with the oligosaccharide chain attached by N-beta-D-glycosyl linkage to a protein L-asparagine.. It functions in the pathway cell surface structure biogenesis; S-layer biogenesis. The protein operates within protein modification; protein glycosylation. Oligosaccharyl transferase (OST) that catalyzes the initial transfer of a defined glycan (ManNAcGlc-2,3-diNAcAGlcNAc in M.voltae) from the lipid carrier dolichol-monophosphate to an asparagine residue within an Asn-X-Ser/Thr consensus motif in nascent polypeptide chains, the first step in protein N-glycosylation. Involved in the assembly of an N-linked disaccharide that decorates the S-layer glycoprotein and flagellins. This Methanococcus voltae protein is Dolichyl-phosphooligosaccharide-protein glycotransferase.